The chain runs to 63 residues: Cecropin-A1 (63 aa).

A signal peptide spans 1-19 (MNFYNIFVFVALILAITIG). The residue at position 62 (R62) is an Arginine amide.

The protein belongs to the cecropin family.

The protein localises to the secreted. Functionally, cecropins have lytic and antibacterial activity against several Gram-positive and Gram-negative bacteria. The protein is Cecropin-A1 (CecA1) of Drosophila simulans (Fruit fly).